The primary structure comprises 407 residues: Putative cystathionine beta-lyase (407 aa).

The residue at position 237 (K237) is an N6-(pyridoxal phosphate)lysine.

Belongs to the class-II pyridoxal-phosphate-dependent aminotransferase family. MalY/PatB cystathionine beta-lyase subfamily. The cofactor is pyridoxal 5'-phosphate.

It catalyses the reaction L,L-cystathionine + H2O = L-homocysteine + pyruvate + NH4(+). It carries out the reaction an S-substituted L-cysteine + H2O = a thiol + pyruvate + NH4(+). The protein operates within amino-acid biosynthesis; L-methionine biosynthesis via de novo pathway; L-homocysteine from L-cystathionine: step 1/1. The sequence is that of Putative cystathionine beta-lyase from Mycobacterium tuberculosis (strain CDC 1551 / Oshkosh).